Reading from the N-terminus, the 193-residue chain is Ribosomal RNA large subunit methyltransferase E (193 aa).

S-adenosyl-L-methionine contacts are provided by glycine 48, phenylalanine 50, aspartate 67, asparagine 85, and aspartate 107. Catalysis depends on lysine 147, which acts as the Proton acceptor.

This sequence belongs to the class I-like SAM-binding methyltransferase superfamily. RNA methyltransferase RlmE family.

Its subcellular location is the cytoplasm. It catalyses the reaction uridine(2552) in 23S rRNA + S-adenosyl-L-methionine = 2'-O-methyluridine(2552) in 23S rRNA + S-adenosyl-L-homocysteine + H(+). Specifically methylates the uridine in position 2552 of 23S rRNA at the 2'-O position of the ribose in the fully assembled 50S ribosomal subunit. This is Ribosomal RNA large subunit methyltransferase E from Borrelia duttonii (strain Ly).